The following is a 540-amino-acid chain: Cytochrome P450 27C1 (540 aa).

Cys486 serves as a coordination point for heme.

This sequence belongs to the cytochrome P450 family. Heme serves as cofactor. In terms of tissue distribution, following L-thyroxine, expressed in the retinal pigment epithelium (at protein level).

The protein resides in the membrane. The catalysed reaction is all-trans-retinol + 2 reduced [adrenodoxin] + O2 + 2 H(+) = all-trans-3,4-didehydroretinol + 2 oxidized [adrenodoxin] + 2 H2O. Efficiently catalyzes the conversion of all-trans retinol (also called vitamin A1, the precursor of 11-cis retinal) to 3,4-didehydroretinol (also called vitamin A2, the precursor of 11-cis 3,4-didehydroretinal). Also acts on all-trans retinal and all-trans retinoic acid. The replacement of 11-cis retinal chromophore in photopigments with 11-cis 3,4-didehydroretinal enhances sensitivity to long-wavelength light. This may improve vision in fresh water which is often turbid. The polypeptide is Cytochrome P450 27C1 (cyp27c1) (Danio rerio (Zebrafish)).